A 141-amino-acid polypeptide reads, in one-letter code: HTH-type transcriptional repressor NsrR (141 aa).

In terms of domain architecture, HTH rrf2-type spans 2-129; sequence QLTNFTDYGL…DNYTLADLVE (128 aa). Residues 28–51 constitute a DNA-binding region (H-T-H motif); it reads ISEVTDVYGVSRNHMVKIINQLSR. Positions 91, 96, and 102 each coordinate [2Fe-2S] cluster.

[2Fe-2S] cluster serves as cofactor.

In terms of biological role, nitric oxide-sensitive repressor of genes involved in protecting the cell against nitrosative stress. May require iron for activity. This Shigella boydii serotype 18 (strain CDC 3083-94 / BS512) protein is HTH-type transcriptional repressor NsrR.